A 722-amino-acid polypeptide reads, in one-letter code: Peroxisomal bifunctional enzyme (722 aa).

Positions 1 to 281 are enoyl-CoA hydratase / isomerase; the sequence is MAEYLRLPHS…FAEKSANKWS (281 aa). Ala2 carries the post-translational modification Blocked amino end (Ala). Lys38 is modified (N6-succinyllysine). Gly100 contacts substrate. Lys173 is modified (N6-acetyllysine; alternate). Lys173 bears the N6-succinyllysine; alternate mark. Lys182 carries the N6-succinyllysine modification. Residues Lys190 and Lys218 each carry the N6-acetyllysine; alternate modification. An N6-succinyllysine; alternate mark is found at Lys190 and Lys218. At Lys241 the chain carries N6-succinyllysine. Lys249 bears the N6-acetyllysine mark. Lys253 is modified (N6-succinyllysine). Residue Lys275 is modified to N6-acetyllysine; alternate. The residue at position 275 (Lys275) is an N6-succinyllysine; alternate. N6-succinyllysine is present on residues Lys279, Lys289, and Lys330. A 3-hydroxyacyl-CoA dehydrogenase region spans residues 282–571; that stretch reads TPSGASWKTA…DMLCEAGRFG (290 aa). An N6-acetyllysine mark is found at Lys345, Lys359, and Lys463. Lys531 is modified (N6-succinyllysine). A Phosphothreonine modification is found at Thr547. Lys576 bears the N6-succinyllysine mark. Lys583, Lys590, and Lys709 each carry N6-acetyllysine; alternate. Lys583, Lys590, and Lys709 each carry N6-succinyllysine; alternate. The Microbody targeting signal motif lies at 720–722; sequence SKL. Lys721 bears the N6-succinyllysine mark.

It in the N-terminal section; belongs to the enoyl-CoA hydratase/isomerase family. This sequence in the C-terminal section; belongs to the 3-hydroxyacyl-CoA dehydrogenase family. As to quaternary structure, monomer. Acetylated, leading to enhanced enzyme activity. Acetylation is enhanced by up to 80% after treatment either with trichostin A (TCA) or with nicotinamide (NAM) with highest increase on Lys-345. Acetylation and enzyme activity increased by about 1.5% on addition of fatty acids.

The protein resides in the peroxisome. The catalysed reaction is a (3S)-3-hydroxyacyl-CoA = a (2E)-enoyl-CoA + H2O. The enzyme catalyses a 4-saturated-(3S)-3-hydroxyacyl-CoA = a (3E)-enoyl-CoA + H2O. It catalyses the reaction a (3Z)-enoyl-CoA = a 4-saturated (2E)-enoyl-CoA. It carries out the reaction a (3E)-enoyl-CoA = a 4-saturated (2E)-enoyl-CoA. The catalysed reaction is a (3S)-3-hydroxyacyl-CoA + NAD(+) = a 3-oxoacyl-CoA + NADH + H(+). The enzyme catalyses (2S,3S)-3-hydroxy-2-methylbutanoyl-CoA = (2E)-2-methylbut-2-enoyl-CoA + H2O. It catalyses the reaction (3E,5Z)-tetradecadienoyl-CoA = (2E,5Z)-tetradecadienoyl-CoA. It carries out the reaction (3E,5Z)-octadienoyl-CoA = (2E,5Z)-octadienoyl-CoA. The catalysed reaction is (3S)-hydroxydecanoyl-CoA + NAD(+) = 3-oxodecanoyl-CoA + NADH + H(+). The enzyme catalyses (3E)-decenoyl-CoA = (2E)-decenoyl-CoA. It catalyses the reaction (3Z)-hexenoyl-CoA = (2E)-hexenoyl-CoA. It carries out the reaction (3E)-hexenoyl-CoA = (2E)-hexenoyl-CoA. The catalysed reaction is (3S)-hydroxydecanoyl-CoA = (2E)-decenoyl-CoA + H2O. The enzyme catalyses (3S)-hydroxyhexanoyl-CoA = (2E)-hexenoyl-CoA + H2O. It catalyses the reaction (3S)-hydroxyhexadecanoyl-CoA + NAD(+) = 3-oxohexadecanoyl-CoA + NADH + H(+). It carries out the reaction (3S)-hydroxyhexadecanoyl-CoA = (2E)-hexadecenoyl-CoA + H2O. The catalysed reaction is (2E)-hexadecenedioyl-CoA + H2O = (3S)-hydroxyhexadecanedioyl-CoA. The enzyme catalyses (3S)-hydroxyhexadecanedioyl-CoA + NAD(+) = 3-oxohexadecanedioyl-CoA + NADH + H(+). It functions in the pathway lipid metabolism; fatty acid beta-oxidation. Its activity is regulated as follows. Enzyme activity enhanced by acetylation. Peroxisomal trifunctional enzyme possessing 2-enoyl-CoA hydratase, 3-hydroxyacyl-CoA dehydrogenase, and delta 3, delta 2-enoyl-CoA isomerase activities. Catalyzes two of the four reactions of the long chain fatty acids peroxisomal beta-oxidation pathway. Can also use branched-chain fatty acids such as 2-methyl-2E-butenoyl-CoA as a substrate, which is hydrated into (2S,3S)-3-hydroxy-2-methylbutanoyl-CoA. Optimal isomerase for 2,5 double bonds into 3,5 form isomerization in a range of enoyl-CoA species. Also able to isomerize both 3-cis and 3-trans double bonds into the 2-trans form in a range of enoyl-CoA species. Regulates the amount of medium-chain dicarboxylic fatty acids which are essential regulators of all fatty acid oxidation pathways. Also involved in the degradation of long-chain dicarboxylic acids through peroxisomal beta-oxidation. This is Peroxisomal bifunctional enzyme from Rattus norvegicus (Rat).